The primary structure comprises 508 residues: WD repeat-containing protein DDB_G0290555 (508 aa).

WD repeat units follow at residues T32–E74, N159–S198, F252–S292, and D295–K334. Positions E368–K508 are disordered. Residues M399–N435 are compositionally biased toward acidic residues. Basic and acidic residues predominate over residues I436–S446. Acidic residues predominate over residues D447–D456. Over residues N471 to T493 the composition is skewed to low complexity. Over residues L497 to K508 the composition is skewed to basic residues.

The chain is WD repeat-containing protein DDB_G0290555 from Dictyostelium discoideum (Social amoeba).